The following is a 187-amino-acid chain: Elongation factor P (187 aa).

It belongs to the elongation factor P family.

It is found in the cytoplasm. It functions in the pathway protein biosynthesis; polypeptide chain elongation. Its function is as follows. Involved in peptide bond synthesis. Stimulates efficient translation and peptide-bond synthesis on native or reconstituted 70S ribosomes in vitro. Probably functions indirectly by altering the affinity of the ribosome for aminoacyl-tRNA, thus increasing their reactivity as acceptors for peptidyl transferase. The chain is Elongation factor P from Corynebacterium aurimucosum (strain ATCC 700975 / DSM 44827 / CIP 107346 / CN-1) (Corynebacterium nigricans).